The primary structure comprises 545 residues: MAQLAGQPVVILPEGTQRYVGRDAQRLNILAARIVAETIRTTLGPKGMDKMLVDSLGDIVITNDGATILDEMDIQHPAAKMMVEVAKTQDKEAGDGTTTAVVIAGELLKKAEELLDQNIHPSIIIKGYALAAEKAQEILEGIAKEVSPDDVETLKKAAVTSITGKAAEEEREYLAEIAVEAVRQVAEKVGDKYKVDLDNIKFEKKEGASVHETQLIRGVVIDKEVVHPGMPKRVENAKIALINDALEVKETETDAEIRITSPEQLQAFLEQEERMLREMVDKIKEVGANVVFVQKGIDDLAQHYLAKYGIMAVRRVKKSDMEKLAKATGAKIVTNVRDLTPEDLGEAELVEQRKVAGENMIFVEGCKNPKAVTILIRGGTEHVVDEVERALEDAVKVVKDIVEDGKILPAGGAPEIELAIKLDEYAKEVGGKEQLAIEAFAEALKVIPRTLAENAGLDPVETLVKVIAAHKEKGPTIGVDVFEGEPADMMEKGVIAPLRVPKQAIKSASEAAIMILRIDDVIAASKLEKDKEDKGGSNDFGSDLD.

This sequence belongs to the TCP-1 chaperonin family. In terms of assembly, forms an oligomeric complex of eight-membered rings.

Its function is as follows. Molecular chaperone; binds unfolded polypeptides in vitro, and has a weak ATPase activity. The chain is Thermosome subunit (ths) from Desulfurococcus sp. (strain SY).